Here is a 272-residue protein sequence, read N- to C-terminus: NADH-cytochrome b5 reductase 3 (272 aa).

The region spanning Asp11 to Gln123 is the FAD-binding FR-type domain. Lys13 carries the N6-acetyllysine modification. Position 14 is a phosphotyrosine (Tyr14). The residue at position 21 (Lys21) is an N6-acetyllysine. FAD-binding residues include Arg63, Pro64, Tyr65, Val80, Lys82, and Tyr84. Lys91 carries the post-translational modification N6-acetyllysine. Positions 97, 98, 99, and 156 each coordinate FAD.

Belongs to the flavoprotein pyridine nucleotide cytochrome reductase family. As to quaternary structure, component of a complex composed of cytochrome b5, NADH-cytochrome b5 reductase (CYB5R3) and MTARC2. Interacts with MTLN; the interaction is required to maintain cellular lipid composition and leads to stimulation of mitochondrial respiratory complex I activity. The cofactor is FAD.

The protein localises to the endoplasmic reticulum membrane. It localises to the mitochondrion outer membrane. The catalysed reaction is 2 Fe(III)-[cytochrome b5] + NADH = 2 Fe(II)-[cytochrome b5] + NAD(+) + H(+). In terms of biological role, catalyzes the reduction of two molecules of cytochrome b5 using NADH as the electron donor. In Sus scrofa (Pig), this protein is NADH-cytochrome b5 reductase 3 (CYB5R3).